We begin with the raw amino-acid sequence, 80 residues long: Venom protein HGE029 (80 aa).

A signal peptide spans 1 to 22; that stretch reads MNAKAFLAIFMIALLITDRAEA.

It belongs to the non-disulfide-bridged peptide (NDBP) superfamily. Long chain multifunctional peptide (group 2) family. In terms of tissue distribution, expressed by the venom gland.

The protein localises to the secreted. This Hoffmannihadrurus gertschi (Scorpion) protein is Venom protein HGE029.